The sequence spans 325 residues: MVLPEEPAILEVRHAVRRWIAAHAPDGEIAVALSGGADSLALTAAAAAEARSVCALVVDHRLQPGSADVADEAAARARALGCASAEVLPVDVTGSGGLEAAARQARYRALDSARGTRPVLLGHTLDDQAETVLLGLSRGSGGRSIWGMSAYDTPWGRPLLDVRRALTRQACAELGLSPHEDPHNASPDFVRVRLRTEVLPLLEDVLGGGVAGALARTGEHLREEGAVLDAMAADAQAKAVVEGEIDTALLALSAPPVRRRVLRSWLLAAGARGLGDTQLRAVDDLVARWRGQGQVAIGGGTPDARFVVRRRRGRLNVGLDDRRRV.

An ATP-binding site is contributed by 34-39 (SGGADS).

The protein belongs to the tRNA(Ile)-lysidine synthase family.

The protein localises to the cytoplasm. The enzyme catalyses cytidine(34) in tRNA(Ile2) + L-lysine + ATP = lysidine(34) in tRNA(Ile2) + AMP + diphosphate + H(+). Ligates lysine onto the cytidine present at position 34 of the AUA codon-specific tRNA(Ile) that contains the anticodon CAU, in an ATP-dependent manner. Cytidine is converted to lysidine, thus changing the amino acid specificity of the tRNA from methionine to isoleucine. The protein is tRNA(Ile)-lysidine synthase of Rhodococcus jostii (strain RHA1).